The chain runs to 239 residues: Ribosomal RNA small subunit methyltransferase G (239 aa).

Residues G77, F82, 128–129 (AE), and R147 each bind S-adenosyl-L-methionine. Positions 219–239 (RKTPKKYPRKPGTPNKLPIEK) are disordered.

It belongs to the methyltransferase superfamily. RNA methyltransferase RsmG family.

It localises to the cytoplasm. In terms of biological role, specifically methylates the N7 position of guanine in position 535 of 16S rRNA. This is Ribosomal RNA small subunit methyltransferase G from Bacillus cytotoxicus (strain DSM 22905 / CIP 110041 / 391-98 / NVH 391-98).